Reading from the N-terminus, the 357-residue chain is Probable xyloglucan endotransglucosylase/hydrolase protein 29 (357 aa).

A signal peptide spans 1-31 (MRDSIYLLWIDNRLVVIIMMVMMVSCRCVLG). In terms of domain architecture, GH16 spans 32-232 (LENINPIFFD…YTFSPFVSEF (201 aa)). E117 acts as the Nucleophile in catalysis. Residue E121 is the Proton donor of the active site. Residues E121 and 134–136 (QTN) contribute to the xyloglucan site. The N-linked (GlcNAc...) asparagine glycan is linked to N140. Residues 144-148 (NRGRE), 211-212 (SW), and G216 contribute to the xyloglucan site. N241 and N262 each carry an N-linked (GlcNAc...) asparagine glycan. A disulfide bond links C299 and C312. Residue R304 coordinates xyloglucan. The disordered stretch occupies residues 326–357 (GRLKFGGSHPKVHKARKKRRRNRSTPVVSADL). The segment covering 335-348 (PKVHKARKKRRRNR) has biased composition (basic residues). N347 carries N-linked (GlcNAc...) asparagine glycosylation.

This sequence belongs to the glycosyl hydrolase 16 family. XTH group 3 subfamily. In terms of processing, contains at least one intrachain disulfide bond essential for its enzymatic activity.

The protein resides in the secreted. It is found in the cell wall. Its subcellular location is the extracellular space. It localises to the apoplast. The enzyme catalyses breaks a beta-(1-&gt;4) bond in the backbone of a xyloglucan and transfers the xyloglucanyl segment on to O-4 of the non-reducing terminal glucose residue of an acceptor, which can be a xyloglucan or an oligosaccharide of xyloglucan.. In terms of biological role, catalyzes xyloglucan endohydrolysis (XEH) and/or endotransglycosylation (XET). Cleaves and religates xyloglucan polymers, an essential constituent of the primary cell wall, and thereby participates in cell wall construction of growing tissues. In Arabidopsis thaliana (Mouse-ear cress), this protein is Probable xyloglucan endotransglucosylase/hydrolase protein 29 (XTH29).